Consider the following 122-residue polypeptide: MIQMQTYLTIADNTGGKVAQCIKVLGGSKRRYAKIGDIITIVVKQAIPNSSVKKGDVCKAVIVRTSKEVRRKNGTYVRFDDNACVILDANLSPRGKRVFGPVARELRDANFMKVVSLASEVI.

This sequence belongs to the universal ribosomal protein uL14 family. In terms of assembly, part of the 50S ribosomal subunit. Forms a cluster with proteins L3 and L19. In the 70S ribosome, L14 and L19 interact and together make contacts with the 16S rRNA in bridges B5 and B8.

Functionally, binds to 23S rRNA. Forms part of two intersubunit bridges in the 70S ribosome. The chain is Large ribosomal subunit protein uL14 from Borreliella afzelii (strain PKo) (Borrelia afzelii).